Reading from the N-terminus, the 274-residue chain is MSDDAMKLVVVGAAGRMGQALIRLIHATEGLTLHAAVARPGSAFIGKDAGEIAGLGQIGIPVTDDPLSAFLHADGVIDFTTPATSVTFADLAAQARIVHVIGTTGCSAEDETRFKAAARHARIVKSGNMGLGINLLSVLVEQAARALPPADWDIEVLEMHHKHKVDAPSGTALLLGEAAAKGRGIDLGDHSVRVRDGYTGPRPAGSIGFATLRGGAVIGDHSVIFAGEGERLTLSHSAGDRSLFARGALQAALWARDKKPGLYSMLDVLGLSTR.

12–17 is an NAD(+) binding site; it reads GAAGRM. Residue R39 coordinates NADP(+). Residues 102–104 and 126–129 contribute to the NAD(+) site; these read GTT and SGNM. Catalysis depends on H160, which acts as the Proton donor/acceptor. Residue H161 coordinates (S)-2,3,4,5-tetrahydrodipicolinate. K164 functions as the Proton donor in the catalytic mechanism. Position 170–171 (170–171) interacts with (S)-2,3,4,5-tetrahydrodipicolinate; that stretch reads GT.

It belongs to the DapB family.

It localises to the cytoplasm. It carries out the reaction (S)-2,3,4,5-tetrahydrodipicolinate + NAD(+) + H2O = (2S,4S)-4-hydroxy-2,3,4,5-tetrahydrodipicolinate + NADH + H(+). The catalysed reaction is (S)-2,3,4,5-tetrahydrodipicolinate + NADP(+) + H2O = (2S,4S)-4-hydroxy-2,3,4,5-tetrahydrodipicolinate + NADPH + H(+). Its pathway is amino-acid biosynthesis; L-lysine biosynthesis via DAP pathway; (S)-tetrahydrodipicolinate from L-aspartate: step 4/4. Its function is as follows. Catalyzes the conversion of 4-hydroxy-tetrahydrodipicolinate (HTPA) to tetrahydrodipicolinate. This is 4-hydroxy-tetrahydrodipicolinate reductase from Rhizobium rhizogenes (strain K84 / ATCC BAA-868) (Agrobacterium radiobacter).